We begin with the raw amino-acid sequence, 512 residues long: MVSKLDKYWQHPALYWPLLILFAAATPFTFAPYYHFWLMPLIFGAFVRLIELRPRFAVSSAYLFGLTAYTTQFYWIHTALHDVSGLPDLYAVPLTFLLPAYLALYPALCFWLWKKFTLPRGIKIGLVLPILWTLTEFARERFLTGFGWGAIGYSQITPDSPLAGFAPFGGIHMVTLATAFLGVWLVLASDNTARSGKRLLPIILIAALLAAGYTARQTDFTRPDGSRSTVALLQGNIDQTLKWREDQVIPTIQKYYEQVGKTTADIVILPETAIPVMRQNLPENILAKFAEQAQNNGSALAVGISQYTSDGNGYENAVINLTGYQENNQDGIPYYAKNHLVPFGEYKPLPFLTTPLYKMMNMPLSDFRKGGGKQSALLMKNQKIAFNICYEDGFGDELIAAAKDATLLANASNMAWYGKSNAMYQHLQQSQARAMELGRYMVRATNTGATAIISPKGNIIAQAQPDTETVLEGHIKGYVGETPYMKTGSSWWLMGILTLAALILFIFRNKEH.

The next 6 membrane-spanning stretches (helical) occupy residues Leu5 to Ala25, Phe56 to Ile76, Val92 to Leu112, Leu118 to Ala138, Phe168 to Ala188, and Ser195 to Ala215. The region spanning Leu233–Gly477 is the CN hydrolase domain. The Proton acceptor role is filled by Glu271. Lys337 is an active-site residue. Cys389 acts as the Nucleophile in catalysis. The chain crosses the membrane as a helical span at residues Thr487–Phe507.

This sequence belongs to the CN hydrolase family. Apolipoprotein N-acyltransferase subfamily.

It localises to the cell inner membrane. It carries out the reaction N-terminal S-1,2-diacyl-sn-glyceryl-L-cysteinyl-[lipoprotein] + a glycerophospholipid = N-acyl-S-1,2-diacyl-sn-glyceryl-L-cysteinyl-[lipoprotein] + a 2-acyl-sn-glycero-3-phospholipid + H(+). It functions in the pathway protein modification; lipoprotein biosynthesis (N-acyl transfer). Functionally, catalyzes the phospholipid dependent N-acylation of the N-terminal cysteine of apolipoprotein, the last step in lipoprotein maturation. The chain is Apolipoprotein N-acyltransferase from Neisseria meningitidis serogroup A / serotype 4A (strain DSM 15465 / Z2491).